The chain runs to 309 residues: Protease HtpX homolog (309 aa).

2 helical membrane passes run 7–27 (FILLAGLTALFVGAGYMIGGP) and 28–48 (TGMLVALVLAVGMNLFSYWNA). A Zn(2+)-binding site is contributed by histidine 134. Glutamate 135 is a catalytic residue. Histidine 138 is a binding site for Zn(2+). 2 consecutive transmembrane segments (helical) span residues 149-169 (VTATIAGAISALANFAFFFGG) and 177-197 (PGGLVGTIALAILAPIAAMLV). Glutamate 206 contacts Zn(2+). The interval 289-309 (TRGRSGTAVPTGATGKSGPWG) is disordered.

This sequence belongs to the peptidase M48B family. Requires Zn(2+) as cofactor.

The protein resides in the cell inner membrane. This Caulobacter sp. (strain K31) protein is Protease HtpX homolog.